The chain runs to 859 residues: Protein translocase subunit SecA (859 aa).

ATP contacts are provided by residues Gln88, 106–110 (GEGKT), and Asp496. The interval 818-838 (FSHQPQSEVKVSRNDPCPCGS) is disordered. Zn(2+) contacts are provided by Cys834, Cys836, Cys845, and Cys846.

It belongs to the SecA family. Monomer and homodimer. Part of the essential Sec protein translocation apparatus which comprises SecA, SecYEG and auxiliary proteins SecDF-YajC and YidC. Zn(2+) is required as a cofactor.

It localises to the cell inner membrane. It is found in the cytoplasm. It catalyses the reaction ATP + H2O + cellular proteinSide 1 = ADP + phosphate + cellular proteinSide 2.. Part of the Sec protein translocase complex. Interacts with the SecYEG preprotein conducting channel. Has a central role in coupling the hydrolysis of ATP to the transfer of proteins into and across the cell membrane, serving as an ATP-driven molecular motor driving the stepwise translocation of polypeptide chains across the membrane. In Wolinella succinogenes (strain ATCC 29543 / DSM 1740 / CCUG 13145 / JCM 31913 / LMG 7466 / NCTC 11488 / FDC 602W) (Vibrio succinogenes), this protein is Protein translocase subunit SecA.